We begin with the raw amino-acid sequence, 231 residues long: MAHPAQLGLQNATSPIMEELIAFHDHALMIIFLISSLVLYVISLMLTTKLTHTSTMNAQEIEMIWTILPAIILIMIALPSLRILYMTDEFNKPYLTLKAIGHQWYWSYEYSDYEDLAFDSYITPTYFLEPGEFRLLEVDNRTTLPMEADIRMLISSQDVLHSWAVPSLGVKADAIPGRLNQVMLASMRPGLFYGQCSEICGSNHSFMPIVLEFIYFQDFEVWASYLYIVSL.

At 1–14 (MAHPAQLGLQNATS) the chain is on the mitochondrial intermembrane side. Residues 15 to 45 (PIMEELIAFHDHALMIIFLISSLVLYVISLM) traverse the membrane as a helical segment. The Mitochondrial matrix segment spans residues 46-59 (LTTKLTHTSTMNAQ). Residues 60–87 (EIEMIWTILPAIILIMIALPSLRILYMT) traverse the membrane as a helical segment. Over 88 to 231 (DEFNKPYLTL…WASYLYIVSL (144 aa)) the chain is Mitochondrial intermembrane. Cu cation is bound by residues His-161, Cys-196, Glu-198, Cys-200, His-204, and Met-207. A Mg(2+)-binding site is contributed by Glu-198.

It belongs to the cytochrome c oxidase subunit 2 family. As to quaternary structure, component of the cytochrome c oxidase (complex IV, CIV), a multisubunit enzyme composed of 14 subunits. The complex is composed of a catalytic core of 3 subunits MT-CO1, MT-CO2 and MT-CO3, encoded in the mitochondrial DNA, and 11 supernumerary subunits COX4I, COX5A, COX5B, COX6A, COX6B, COX6C, COX7A, COX7B, COX7C, COX8 and NDUFA4, which are encoded in the nuclear genome. The complex exists as a monomer or a dimer and forms supercomplexes (SCs) in the inner mitochondrial membrane with NADH-ubiquinone oxidoreductase (complex I, CI) and ubiquinol-cytochrome c oxidoreductase (cytochrome b-c1 complex, complex III, CIII), resulting in different assemblies (supercomplex SCI(1)III(2)IV(1) and megacomplex MCI(2)III(2)IV(2)). Found in a complex with TMEM177, COA6, COX18, COX20, SCO1 and SCO2. Interacts with TMEM177 in a COX20-dependent manner. Interacts with COX20. Interacts with COX16. Cu cation serves as cofactor.

The protein resides in the mitochondrion inner membrane. The enzyme catalyses 4 Fe(II)-[cytochrome c] + O2 + 8 H(+)(in) = 4 Fe(III)-[cytochrome c] + 2 H2O + 4 H(+)(out). In terms of biological role, component of the cytochrome c oxidase, the last enzyme in the mitochondrial electron transport chain which drives oxidative phosphorylation. The respiratory chain contains 3 multisubunit complexes succinate dehydrogenase (complex II, CII), ubiquinol-cytochrome c oxidoreductase (cytochrome b-c1 complex, complex III, CIII) and cytochrome c oxidase (complex IV, CIV), that cooperate to transfer electrons derived from NADH and succinate to molecular oxygen, creating an electrochemical gradient over the inner membrane that drives transmembrane transport and the ATP synthase. Cytochrome c oxidase is the component of the respiratory chain that catalyzes the reduction of oxygen to water. Electrons originating from reduced cytochrome c in the intermembrane space (IMS) are transferred via the dinuclear copper A center (CU(A)) of subunit 2 and heme A of subunit 1 to the active site in subunit 1, a binuclear center (BNC) formed by heme A3 and copper B (CU(B)). The BNC reduces molecular oxygen to 2 water molecules using 4 electrons from cytochrome c in the IMS and 4 protons from the mitochondrial matrix. This Alouatta palliata (Mantled howler monkey) protein is Cytochrome c oxidase subunit 2 (MT-CO2).